The primary structure comprises 328 residues: uncharacterized protein (328 aa).

The H-T-H motif DNA-binding region spans 72 to 91 (ALQIRDKFNLQRVIIVPDGE).

This sequence belongs to the SorC transcriptional regulatory family.

This is an uncharacterized protein from Escherichia coli (strain K12).